Reading from the N-terminus, the 458-residue chain is Protein RICE SALT SENSITIVE 3 (458 aa).

The segment covering 1–17 (MVGSGAAGGGGGGGGGG) has biased composition (gly residues). 4 disordered regions span residues 1–21 (MVGSGAAGGGGGGGGGGDHAR), 220–325 (TSPS…PEGD), 354–374 (GGGADDGSKTAAAAQDAGHGG), and 386–458 (SHSN…TFLE). Positions 220-232 (TSPSPSSFPLKQQ) are enriched in low complexity. Pro residues predominate over residues 245-262 (HAPPQLPPGASPLFPPGP). Low complexity predominate over residues 308 to 317 (QQPMAAPQQH). Residues 413-436 (SSSTTSTSPSVSASTAPAPPQQQQ) are compositionally biased toward low complexity.

In terms of assembly, interacts with BHLH094, BHLH089, TIFY11A/JAZ9 and TIFY11C/JAZ11. Forms a ternary complex with TIFY11A/JAZ9 and BHLH094 in the nucleus. Expressed in root tips. Expressed at high levels in the meristematic zone and at low levels in the elongation zone of the root tip.

The protein resides in the nucleus. Its subcellular location is the cytoplasm. Functionally, involved in the repression of jasmonate (JA)-induced genes. Forms a ternary complex with TIFY11A/JAZ9 and BHLH094 to negatively regulate JA-responsive genes. Involved in transcriptional regulation in the root tip. Plays a regulatory role in root cell elongation. Regulates root cell elongation during salt stress. This chain is Protein RICE SALT SENSITIVE 3, found in Oryza sativa subsp. japonica (Rice).